We begin with the raw amino-acid sequence, 190 residues long: MRGLRPALSTFIFLLLITGGVYPLLTTVLGQWWFPWQANGSLIREGDTVRGSALIGQNFTGNGYFQGRPSATAEMPYNPQASGGSNLAVSNPELDKQIAARVAALRAANPDASTNVPVELVTASASGLDNNITPQAAVWQIPRVAKARNLSVEQLTQLIAKYSQQPLVKYIGQPVVNIVELNLALDKLDE.

The helical transmembrane segment at 10 to 30 threads the bilayer; the sequence is TFIFLLLITGGVYPLLTTVLG.

It belongs to the KdpC family. In terms of assembly, the system is composed of three essential subunits: KdpA, KdpB and KdpC.

The protein localises to the cell inner membrane. Functionally, part of the high-affinity ATP-driven potassium transport (or Kdp) system, which catalyzes the hydrolysis of ATP coupled with the electrogenic transport of potassium into the cytoplasm. This subunit acts as a catalytic chaperone that increases the ATP-binding affinity of the ATP-hydrolyzing subunit KdpB by the formation of a transient KdpB/KdpC/ATP ternary complex. In Escherichia coli (strain SE11), this protein is Potassium-transporting ATPase KdpC subunit.